The primary structure comprises 209 residues: Rac-like GTP-binding protein ARAC7 (209 aa).

Residue 13–20 participates in GTP binding; sequence GDGAVGKT. Positions 35–43 match the Effector region motif; the sequence is YIPTVFDNF. Residues 60–64 and 118–121 contribute to the GTP site; these read DTAGQ and TKLD. Residues cysteine 196, cysteine 203, and cysteine 206 are each lipidated (S-palmitoyl cysteine).

Belongs to the small GTPase superfamily. Rho family. Post-translationally, although this sequence has a C-terminal -CXXX, it is palmitoylated at Cys-206, rather than prenylated.

It is found in the membrane. Functionally, acts as a negative regulator of abscisic acid (ABA) responses. The chain is Rac-like GTP-binding protein ARAC7 (ARAC7) from Arabidopsis thaliana (Mouse-ear cress).